Here is a 1508-residue protein sequence, read N- to C-terminus: ABC-type transporter oblD (1508 aa).

Disordered regions lie at residues 1-35 (MSLGPGGFEATPNSVMPSDASLHNQSHHTDSLTNN) and 54-82 (KYTQNSVYSTTSQNPFAAEPGSKLDPNGG). A compositionally biased stretch (polar residues) spans 11-24 (TPNSVMPSDASLHN). N-linked (GlcNAc...) asparagine glycans are attached at residues Asn-24 and Asn-35. The span at 55 to 68 (YTQNSVYSTTSQNP) shows a compositional bias: polar residues. Asn-83, Asn-231, and Asn-314 each carry an N-linked (GlcNAc...) asparagine glycan. The 255-residue stretch at 136–390 (LEAVGLVRKL…FLNMGFVCPD (255 aa)) folds into the ABC transporter 1 domain. 5 helical membrane-spanning segments follow: residues 501–521 (ITISSAMGNAIIALIISSMFF), 536–556 (LLFFAIVINAFSSGLEMLTLY), 610–630 (GNFFFFVFTSFVLTLTMSMFF), 643–663 (ALPFAAILITGLTMYTGFTIP), and 752–772 (GIIFAFMVILCAIYLVASDFI). An ABC transporter 2 domain is found at 828–1070 (FQWKDICYDI…ILIDYFTRNG (243 aa)). 864–871 (GVSGAGKT) lines the ATP pocket. 4 helical membrane-spanning segments follow: residues 1172-1192 (YIYSKAFLCVSTSLYVGFSLY), 1206-1226 (FAIFTLFFLFGQFIQQIMPHF), 1296-1316 (LFVWVFLMFASTFAHFMIAAL), and 1322-1342 (AGNMGNLLFTLCVIFCGILTT). An N-linked (GlcNAc...) asparagine glycan is attached at Asn-1390. Residues 1443–1463 (FGLMWVFVVFNAFAACGLYYW) traverse the membrane as a helical segment.

This sequence belongs to the ABC transporter superfamily. ABCG family. PDR (TC 3.A.1.205) subfamily.

The protein localises to the cell membrane. ABC-type transporter; part of the gene cluster that mediates the biosynthesis of the sesterterpenes ophiobolins, fungal phytotoxins with potential anti-cancer activities. Acts as a specific transporter involved in ophiobolins secretion. The sequence is that of ABC-type transporter oblD from Cochliobolus heterostrophus (strain C5 / ATCC 48332 / race O) (Southern corn leaf blight fungus).